Here is a 643-residue protein sequence, read N- to C-terminus: Threonine--tRNA ligase (643 aa).

The 61-residue stretch at 1 to 61 (MIKVSLKDGS…NEDVSLSICT (61 aa)) folds into the TGS domain. The tract at residues 240 to 540 (DHNKLGRELK…LIEKYAGAFP (301 aa)) is catalytic. Zn(2+)-binding residues include cysteine 335, histidine 386, and histidine 517.

The protein belongs to the class-II aminoacyl-tRNA synthetase family. Homodimer. Requires Zn(2+) as cofactor.

It localises to the cytoplasm. The catalysed reaction is tRNA(Thr) + L-threonine + ATP = L-threonyl-tRNA(Thr) + AMP + diphosphate + H(+). Its function is as follows. Catalyzes the attachment of threonine to tRNA(Thr) in a two-step reaction: L-threonine is first activated by ATP to form Thr-AMP and then transferred to the acceptor end of tRNA(Thr). Also edits incorrectly charged L-seryl-tRNA(Thr). The sequence is that of Threonine--tRNA ligase from Clostridium botulinum (strain Alaska E43 / Type E3).